A 330-amino-acid chain; its full sequence is Uroporphyrinogen decarboxylase (330 aa).

Substrate is bound by residues 10–14 (RQAGR), Phe29, Ser59, Asp60, Tyr137, Ser192, and His307.

Belongs to the uroporphyrinogen decarboxylase family. Homodimer.

The protein resides in the plastid. It localises to the chloroplast. The catalysed reaction is uroporphyrinogen III + 4 H(+) = coproporphyrinogen III + 4 CO2. It functions in the pathway porphyrin-containing compound metabolism; protoporphyrin-IX biosynthesis; coproporphyrinogen-III from 5-aminolevulinate: step 4/4. Functionally, catalyzes the decarboxylation of four acetate groups of uroporphyrinogen-III to yield coproporphyrinogen-III. The chain is Uroporphyrinogen decarboxylase (DCUP) from Hordeum vulgare (Barley).